A 385-amino-acid chain; its full sequence is Methylthioribose-1-phosphate isomerase (385 aa).

The Proton donor role is filled by aspartate 255.

This sequence belongs to the eIF-2B alpha/beta/delta subunits family. MtnA subfamily.

It localises to the cytoplasm. The protein resides in the nucleus. The enzyme catalyses 5-(methylsulfanyl)-alpha-D-ribose 1-phosphate = 5-(methylsulfanyl)-D-ribulose 1-phosphate. The protein operates within amino-acid biosynthesis; L-methionine biosynthesis via salvage pathway; L-methionine from S-methyl-5-thio-alpha-D-ribose 1-phosphate: step 1/6. Functionally, catalyzes the interconversion of methylthioribose-1-phosphate (MTR-1-P) into methylthioribulose-1-phosphate (MTRu-1-P). This is Methylthioribose-1-phosphate isomerase (mri1) from Aspergillus clavatus (strain ATCC 1007 / CBS 513.65 / DSM 816 / NCTC 3887 / NRRL 1 / QM 1276 / 107).